The sequence spans 260 residues: Uroplakin-1b (260 aa).

Residues 1-12 lie on the Cytoplasmic side of the membrane; that stretch reads MAKDDSSVRCFQ. The chain crosses the membrane as a helical span at residues 13 to 38; that stretch reads GLLIFGNVIVGMCGIALTAECIFFVS. Over 39–60 the chain is Extracellular; the sequence is DQHSLYPLLEATDNDDIYGAAW. A helical transmembrane segment spans residues 61 to 81; that stretch reads IGMFVGICLFCLSVLGIVGIM. The Cytoplasmic segment spans residues 82–86; that stretch reads KSNRK. The helical transmembrane segment at 87–107 threads the bilayer; sequence ILLAYFILMFIVYGFEVASCI. The Extracellular segment spans residues 108–229; that stretch reads TAATQRDFFT…ELISGPMNRH (122 aa). Residues 230–250 form a helical membrane-spanning segment; sequence AWGVAWFGFAILCWTFWVLLG. Residues 251–260 are Cytoplasmic-facing; it reads TMFYWSRIEY.

Belongs to the tetraspanin (TM4SF) family. In terms of assembly, heterodimer with uroplakin-3A (UPK3A) or uroplakin-3B (UPK3B).

The protein resides in the membrane. In terms of biological role, component of the asymmetric unit membrane (AUM); a highly specialized biomembrane elaborated by terminally differentiated urothelial cells. This Neovison vison (American mink) protein is Uroplakin-1b (UPK1B).